Here is a 330-residue protein sequence, read N- to C-terminus: Polyprenyl transferase ausN (330 aa).

5 helical membrane-spanning segments follow: residues 116–136, 165–185, 189–209, 238–258, and 260–280; these read AATI…LFLP, LILI…GMEP, ILSM…IDLV, AYSL…LGGL, and VPFV…FLRA.

The protein belongs to the UbiA prenyltransferase family. It depends on Mg(2+) as a cofactor.

It is found in the membrane. It catalyses the reaction 3,5-dimethylorsellinate + (2E,6E)-farnesyl diphosphate = (3R)-3-farnesyl-6-hydroxy-2,3,5-trimethyl-4-oxocyclohexa-1,5-diene-1-carboxylate + diphosphate + H(+). Its pathway is secondary metabolite biosynthesis; terpenoid biosynthesis. Its function is as follows. Polyprenyl transferase; part of the gene cluster B that mediates the biosynthesis of austinol and dehydroaustinol, two fungal meroterpenoids. The first step of the pathway is the synthesis of 3,5-dimethylorsellinic acid by the polyketide synthase ausA. 3,5-dimethylorsellinic acid is then prenylated by the polyprenyl transferase ausN. Further epoxidation by the FAD-dependent monooxygenase ausM and cyclization by the probable terpene cyclase ausL lead to the formation of protoaustinoid A. Protoaustinoid A is then oxidized to spiro-lactone preaustinoid A3 by the combined action of the FAD-binding monooxygenases ausB and ausC, and the dioxygenase ausE. Acid-catalyzed keto-rearrangement and ring contraction of the tetraketide portion of preaustinoid A3 by ausJ lead to the formation of preaustinoid A4. The aldo-keto reductase ausK, with the help of ausH, is involved in the next step by transforming preaustinoid A4 into isoaustinone which is in turn hydroxylated by the P450 monooxygenase ausI to form austinolide. Finally, the cytochrome P450 monooxygenase ausG modifies austinolide to austinol. Austinol can be further modified to dehydroaustinol which forms a diffusible complex with diorcinol that initiates conidiation. Due to genetic rearrangements of the clusters and the subsequent loss of some enzymes, the end products of the Emericella nidulans austinoid biosynthesis clusters are austinol and dehydroaustinol, even if additional enzymes, such as the O-acetyltransferase ausQ and the cytochrome P450 monooxygenase ausR are still functional. This Emericella nidulans (strain FGSC A4 / ATCC 38163 / CBS 112.46 / NRRL 194 / M139) (Aspergillus nidulans) protein is Polyprenyl transferase ausN.